Consider the following 345-residue polypeptide: D-fructose 1,6-bisphosphatase class 2/sedoheptulose 1,7-bisphosphatase (345 aa).

Mn(2+) contacts are provided by Asp-33, Glu-57, Asp-97, and Glu-100. Substrate-binding positions include 100–102, Tyr-131, 176–178, and 198–200; these read EGT, RPR, and DGD. Position 225 (Glu-225) interacts with Mn(2+).

This sequence belongs to the FBPase class 2 family. Homotetramer. The cofactor is Mn(2+).

It catalyses the reaction beta-D-fructose 1,6-bisphosphate + H2O = beta-D-fructose 6-phosphate + phosphate. The catalysed reaction is D-sedoheptulose 1,7-bisphosphate + H2O = D-sedoheptulose 7-phosphate + phosphate. It participates in carbohydrate biosynthesis; Calvin cycle. With respect to regulation, inhibited by AMP and slightly innibited by hydrogen peroxyde. Functionally, catalyzes the hydrolysis of fructose 1,6-bisphosphate (Fru 1,6-P2) and sedoheptulose 1,7-bisphosphate (Sed 1,7-P2) to fructose 6-phosphate and sedoheptulose 7-phosphate, respectively. The polypeptide is D-fructose 1,6-bisphosphatase class 2/sedoheptulose 1,7-bisphosphatase (Synechococcus elongatus (strain ATCC 33912 / PCC 7942 / FACHB-805) (Anacystis nidulans R2)).